A 446-amino-acid polypeptide reads, in one-letter code: Phosphoglucosamine mutase (446 aa).

The Phosphoserine intermediate role is filled by Ser99. 4 residues coordinate Mg(2+): Ser99, Asp242, Asp244, and Asp246. Position 99 is a phosphoserine (Ser99).

Belongs to the phosphohexose mutase family. Mg(2+) is required as a cofactor. In terms of processing, activated by phosphorylation.

It carries out the reaction alpha-D-glucosamine 1-phosphate = D-glucosamine 6-phosphate. Catalyzes the conversion of glucosamine-6-phosphate to glucosamine-1-phosphate. The protein is Phosphoglucosamine mutase of Campylobacter fetus subsp. fetus (strain 82-40).